The following is a 223-amino-acid chain: Phosphoribosylformylglycinamidine synthase subunit PurQ (223 aa).

Positions Phe-3–Val-223 constitute a Glutamine amidotransferase type-1 domain. Residue Cys-85 is the Nucleophile of the active site. Residues His-193 and Glu-195 contribute to the active site.

As to quaternary structure, part of the FGAM synthase complex composed of 1 PurL, 1 PurQ and 2 PurS subunits.

The protein resides in the cytoplasm. The catalysed reaction is N(2)-formyl-N(1)-(5-phospho-beta-D-ribosyl)glycinamide + L-glutamine + ATP + H2O = 2-formamido-N(1)-(5-O-phospho-beta-D-ribosyl)acetamidine + L-glutamate + ADP + phosphate + H(+). The enzyme catalyses L-glutamine + H2O = L-glutamate + NH4(+). Its pathway is purine metabolism; IMP biosynthesis via de novo pathway; 5-amino-1-(5-phospho-D-ribosyl)imidazole from N(2)-formyl-N(1)-(5-phospho-D-ribosyl)glycinamide: step 1/2. In terms of biological role, part of the phosphoribosylformylglycinamidine synthase complex involved in the purines biosynthetic pathway. Catalyzes the ATP-dependent conversion of formylglycinamide ribonucleotide (FGAR) and glutamine to yield formylglycinamidine ribonucleotide (FGAM) and glutamate. The FGAM synthase complex is composed of three subunits. PurQ produces an ammonia molecule by converting glutamine to glutamate. PurL transfers the ammonia molecule to FGAR to form FGAM in an ATP-dependent manner. PurS interacts with PurQ and PurL and is thought to assist in the transfer of the ammonia molecule from PurQ to PurL. In Staphylococcus haemolyticus (strain JCSC1435), this protein is Phosphoribosylformylglycinamidine synthase subunit PurQ.